The following is a 303-amino-acid chain: Recombination-associated protein RdgC (303 aa).

The protein belongs to the RdgC family.

The protein localises to the cytoplasm. Its subcellular location is the nucleoid. May be involved in recombination. The polypeptide is Recombination-associated protein RdgC (Shewanella frigidimarina (strain NCIMB 400)).